Consider the following 538-residue polypeptide: MDFGGILLHLEARSMATVLIAGLLVYWVGSAIFLAVLHPLAKFPGPKLAAASDWWLVYHEWFLGKSLTDILFDLHQNYGTINVPYGGLQDLWLDMDRIAYVVQSLTWESALEANSLVKLHFSSMQAYSDIYNVKSKWDKDPEVYKAIVDTSSAFGLRNYHEAKERRDLIWPFYSRQSVQRMQKAINRQISFLVDQLDKQNQEGKLSNMSMAFRCLAQDIMADICLGKSFGTLEERDFGSPLIHALDEGLESYVLMKSFPTLRNILYSISAMVTLPGEAEFATYGTIVADHVTRGIQQPDTIPPNTMLGFLVPTSSNTAKEAPQPKLSQGHMTEELQTFVIGAGETVASAMVQGLSGILQSPDLYKNVYEEIVQVWPETDGPVPPIEVLEKLPLLTAVIKEALRLTHGVVTPLARVISAGGACIDGHHVPGGTSVGTSHVFIHMSSDYYDAPDEFRPERWLGSSSDKHLVAFSKGPRGCMGINLAWCQLYLVLATLVRTVQMEYPADLNDIKIKWKDCFQPLYYGRPLQVRCTRAEGHS.

Residues 17–37 (TVLIAGLLVYWVGSAIFLAVL) form a helical membrane-spanning segment. Cys-478 provides a ligand contact to heme.

The protein belongs to the cytochrome P450 family. The cofactor is heme.

It is found in the membrane. The catalysed reaction is pre-flavunoidine + reduced [NADPH--hemoprotein reductase] + O2 = 10-hydroxy-pre-flavunoidine + oxidized [NADPH--hemoprotein reductase] + H2O + H(+). The protein operates within secondary metabolite biosynthesis; terpenoid biosynthesis. Cytochrome P450 monooxygenase; part of the gene cluster that mediates the biosynthesis of flavunoidine, an alkaloidal terpenoid with a tetracyclic cage-like core connected to dimethylcadaverine via a C-N bond and acylated with 5,5-dimethyl-L-pipecolate. The tetracyclic core is synthesized by the terpene cyclase flvE and the cytochrome P450 monooxygenase flvD. The terpene cyclase flvE catalyzes the cyclization of farnesyl pyrophosphate (FPP) to form (1R,4R,5S)-(+)-acoradiene and the cytochrome P450 monooxygenase flvD is then responsible for oxidative conversion of (1R,4R,5S)-(+)-acoradiene into the tetracyclic cage present in the final product flavunoidine. In parallel, the N-methyltransferase flvH dimethylates L-lysine to give N,N-dimethyl-L-Lysin which is decarboxylated by flvG to afford dimethylcadaverine. The terpene cyclase-like protein flvF is the enzyme that attaches the dimethylcadaverine precusor at the C-7 of the tetracyclic cage to yield pre-flavunoidine. The cytochrome monooxygenase flvC hydroxylates the C-10 position of pre-flavunoidine whereas the NRPS flvI acylates the terpenoid core at the hydroxylated C-10 with dimethylpipecolate to yield final flavunoidine. The bifunctional enzyme flvA and the dehydrogenase flvB are responsible for the synthesis of the dimethylpipecolate precursor. The PLP-dependent lyase domain of flvA might use L-O-acetyl-homoserine and alpha-keto-isovalerate to form an intermediary ketone that can cyclize intramolecularly to yield an imine. The imine can be reduced by flvB to yield the 6-carboxylated pipecolate. The C-terminal alpha-KG-dependent oxygenase domain of flvA is then proposed to catalyze the decarboxylation to yield dimethylpipecolate. This is Cytochrome P450 monooxygenase flvC from Aspergillus flavus (strain ATCC 200026 / FGSC A1120 / IAM 13836 / NRRL 3357 / JCM 12722 / SRRC 167).